The following is a 76-amino-acid chain: Omega-conotoxin-like TxO5 (76 aa).

The signal sequence occupies residues 1 to 22 (MKLTCMMIVAVLFLTAWTFVTA). A propeptide spanning residues 23 to 48 (ITSNGLENLFPKAHHEMKNPEASKLN) is cleaved from the precursor. 3 disulfide bridges follow: Cys51-Cys66, Cys58-Cys70, and Cys65-Cys75.

The protein belongs to the conotoxin O1 superfamily. Expressed by the venom duct.

It is found in the secreted. In terms of biological role, omega-conotoxins act at presynaptic membranes, they bind and block voltage-gated calcium channels (Cav). The sequence is that of Omega-conotoxin-like TxO5 from Conus textile (Cloth-of-gold cone).